Consider the following 411-residue polypeptide: Serine--tRNA ligase (411 aa).

226–228 (TSE) contributes to the L-serine binding site. Position 257–259 (257–259 (RKE)) interacts with ATP. An L-serine-binding site is contributed by Glu280. 344–347 (EISS) contributes to the ATP binding site. Position 379 (Ser379) interacts with L-serine.

This sequence belongs to the class-II aminoacyl-tRNA synthetase family. Type-1 seryl-tRNA synthetase subfamily. In terms of assembly, homodimer. The tRNA molecule binds across the dimer.

It is found in the cytoplasm. It catalyses the reaction tRNA(Ser) + L-serine + ATP = L-seryl-tRNA(Ser) + AMP + diphosphate + H(+). It carries out the reaction tRNA(Sec) + L-serine + ATP = L-seryl-tRNA(Sec) + AMP + diphosphate + H(+). It functions in the pathway aminoacyl-tRNA biosynthesis; selenocysteinyl-tRNA(Sec) biosynthesis; L-seryl-tRNA(Sec) from L-serine and tRNA(Sec): step 1/1. Catalyzes the attachment of serine to tRNA(Ser). Is also able to aminoacylate tRNA(Sec) with serine, to form the misacylated tRNA L-seryl-tRNA(Sec), which will be further converted into selenocysteinyl-tRNA(Sec). The protein is Serine--tRNA ligase of Campylobacter jejuni subsp. doylei (strain ATCC BAA-1458 / RM4099 / 269.97).